Consider the following 442-residue polypeptide: Inner membrane protein PPF-1, chloroplastic (442 aa).

The Lumenal segment spans residues 1 to 108 (MAKTLISSPS…EFVLKVLKDG (108 aa)). Residues 109 to 129 (LSSVHVPYSYGFAIILLTVIV) form a helical membrane-spanning segment. The Stromal segment spans residues 130–183 (KAATLPLTKQQVESTLAMQNLQPKIKAIQERYAGNQERIQLETSRLYTQAGVNP). Residues 184 to 204 (LAGCLPTLATIPVWIGLYQAL) traverse the membrane as a helical segment. Residues 205 to 296 (SNVANEGLLT…QKNTLLIFKF (92 aa)) are Lumenal-facing. The helical transmembrane segment at 297-317 (LPLMIGYFSLSVPSGLTIYWF) threads the bilayer. Over 318–442 (TNNVLSTAQQ…SKRSKRKPVA (125 aa)) the chain is Stromal. Disordered stretches follow at residues 350 to 371 (AGQAKRSASKPEKGGERFRQLK) and 390 to 442 (PLAS…KPVA). Residues 358-371 (SKPEKGGERFRQLK) are compositionally biased toward basic and acidic residues. The span at 414–427 (ESNTSKVSQEVQSF) shows a compositional bias: polar residues. Positions 431–442 (RRSKRSKRKPVA) are enriched in basic residues.

Belongs to the OXA1/ALB3/YidC (TC 2.A.9.2) family. Highly expressed in apical buds. Low levels of expression in leaves. Not expressed in roots, and stems.

Its subcellular location is the plastid. It localises to the chloroplast thylakoid membrane. Functionally, may be required for the insertion of some integral membrane proteins into the chloroplast thylakoid membrane. May play a role in inhibiting senescence. The sequence is that of Inner membrane protein PPF-1, chloroplastic (PPF-1) from Pisum sativum (Garden pea).